We begin with the raw amino-acid sequence, 127 residues long: Serum amyloid A protein (127 aa).

The first 18 residues, Met-1 to Ser-18, serve as a signal peptide directing secretion. Residue Gln-19 is modified to Pyrrolidone carboxylic acid. Residues Gly-89–Tyr-127 are disordered. Over residues Glu-104–Tyr-127 the composition is skewed to basic and acidic residues.

Belongs to the SAA family. In terms of tissue distribution, expressed by the liver; secreted in plasma.

It is found in the secreted. Major acute phase reactant. Apolipoprotein of the HDL complex. This is Serum amyloid A protein (SAA1) from Notamacropus eugenii (Tammar wallaby).